The following is a 197-amino-acid chain: Recombination protein RecR (197 aa).

Residues 57-72 (CSVCFAITEDDPCWIC) form a C4-type zinc finger. Residues 79-174 (GTICVVEEPQ…KVTRLAHGIP (96 aa)) enclose the Toprim domain.

The protein belongs to the RecR family.

May play a role in DNA repair. It seems to be involved in an RecBC-independent recombinational process of DNA repair. It may act with RecF and RecO. The polypeptide is Recombination protein RecR (Citrifermentans bemidjiense (strain ATCC BAA-1014 / DSM 16622 / JCM 12645 / Bem) (Geobacter bemidjiensis)).